The following is a 151-amino-acid chain: Probable calcium-binding protein CML31 (151 aa).

EF-hand domains lie at 14 to 42, 44 to 79, 84 to 119, and 120 to 151; these read ALFATFDHDGDGRISAAELRLCMKTTLGE, VSDEEAGQLVASVDADGDGLLCEAEFVRLVQAAEVE, RRGTGLREAFGMYEMEGEGCITPTSLRRMLRRLGSD, and QDIDDCRAMICRFDLNGDGVLSFDEFKIMMNA. Ca(2+) is bound by residues aspartate 20, aspartate 22, aspartate 24, arginine 26, glutamate 31, aspartate 57, aspartate 59, aspartate 61, and glutamate 68. Positions 133, 135, 137, and 144 each coordinate Ca(2+).

Functionally, potential calcium sensor. In Oryza sativa subsp. japonica (Rice), this protein is Probable calcium-binding protein CML31 (CML31).